The sequence spans 98 residues: MAPINLNLILAFSLALLGVLIYRTHLMSTLLCLEGMMLSLFILMTLLISHFHMYSMSMAPLILLVFSACEAGVGLALLVKISTSHGNDYVQNLNLLQC.

A run of 3 helical transmembrane segments spans residues 1–21, 28–48, and 59–79; these read MAPINLNLILAFSLALLGVLI, STLLCLEGMMLSLFILMTLLI, and APLILLVFSACEAGVGLALLV.

Belongs to the complex I subunit 4L family. In terms of assembly, core subunit of respiratory chain NADH dehydrogenase (Complex I) which is composed of 45 different subunits.

It is found in the mitochondrion inner membrane. The enzyme catalyses a ubiquinone + NADH + 5 H(+)(in) = a ubiquinol + NAD(+) + 4 H(+)(out). Its function is as follows. Core subunit of the mitochondrial membrane respiratory chain NADH dehydrogenase (Complex I) which catalyzes electron transfer from NADH through the respiratory chain, using ubiquinone as an electron acceptor. Part of the enzyme membrane arm which is embedded in the lipid bilayer and involved in proton translocation. The polypeptide is NADH-ubiquinone oxidoreductase chain 4L (MT-ND4L) (Isoodon macrourus (Short-nosed bandicoot)).